Consider the following 211-residue polypeptide: MELADIRREYTKGGLRRKDLKADPIDQFNLWLEQAIKAGLTDPTAMTVATVDENGMPFQRIVLLKNVDKDGFVFYTNLGSRKAQHLEHNSNISLHFPWHPLERQVHITGVAEKLTAMENMKYFTSRPKDSQLAAIASKQSSRISARGVLEGKFLELKQKFAKGEIPMPTFWGGFRVKPQSIEFWQGGEHRLHDRFLFSQHDGEWDIDRLAP.

Residues 7-10 (RREY) and Lys65 contribute to the substrate site. FMN-binding positions include 60-65 (RIVLLK), 75-76 (YT), Arg81, Lys82, and Gln104. Substrate is bound by residues Tyr122, Arg126, and Ser130. FMN contacts are provided by residues 139 to 140 (QS) and Trp184. 190–192 (RLH) is a substrate binding site. Position 194 (Arg194) interacts with FMN.

This sequence belongs to the pyridoxamine 5'-phosphate oxidase family. As to quaternary structure, homodimer. FMN is required as a cofactor.

It carries out the reaction pyridoxamine 5'-phosphate + O2 + H2O = pyridoxal 5'-phosphate + H2O2 + NH4(+). The enzyme catalyses pyridoxine 5'-phosphate + O2 = pyridoxal 5'-phosphate + H2O2. Its pathway is cofactor metabolism; pyridoxal 5'-phosphate salvage; pyridoxal 5'-phosphate from pyridoxamine 5'-phosphate: step 1/1. It functions in the pathway cofactor metabolism; pyridoxal 5'-phosphate salvage; pyridoxal 5'-phosphate from pyridoxine 5'-phosphate: step 1/1. In terms of biological role, catalyzes the oxidation of either pyridoxine 5'-phosphate (PNP) or pyridoxamine 5'-phosphate (PMP) into pyridoxal 5'-phosphate (PLP). The polypeptide is Pyridoxine/pyridoxamine 5'-phosphate oxidase (Vibrio parahaemolyticus serotype O3:K6 (strain RIMD 2210633)).